A 432-amino-acid chain; its full sequence is Enolase (432 aa).

Residues 41–64 (QVPSGASTGSFEAHELRDGDPKRY) form a disordered region. The span at 52–64 (EAHELRDGDPKRY) shows a compositional bias: basic and acidic residues. Q168 serves as a coordination point for (2R)-2-phosphoglycerate. E211 functions as the Proton donor in the catalytic mechanism. Positions 248, 289, and 316 each coordinate Mg(2+). Residues K341, R370, S371, and K392 each coordinate (2R)-2-phosphoglycerate. Residue K341 is the Proton acceptor of the active site.

The protein belongs to the enolase family. Mg(2+) is required as a cofactor.

Its subcellular location is the cytoplasm. It is found in the secreted. The protein localises to the cell surface. The enzyme catalyses (2R)-2-phosphoglycerate = phosphoenolpyruvate + H2O. Its pathway is carbohydrate degradation; glycolysis; pyruvate from D-glyceraldehyde 3-phosphate: step 4/5. In terms of biological role, catalyzes the reversible conversion of 2-phosphoglycerate (2-PG) into phosphoenolpyruvate (PEP). It is essential for the degradation of carbohydrates via glycolysis. The sequence is that of Enolase from Synechocystis sp. (strain ATCC 27184 / PCC 6803 / Kazusa).